The sequence spans 280 residues: Large ribosomal subunit protein uL2 (280 aa).

Disordered stretches follow at residues 32 to 54 (SLLV…SRHM) and 221 to 280 (RGMA…DSKK). The segment covering 37–49 (NKSTGGRNNNGRV) has biased composition (polar residues). Gly residues predominate over residues 232 to 242 (MGGGEGKSKSG). Residues 257 to 280 (KGLKTRKRKKASSKLIVRRRDSKK) show a composition bias toward basic residues.

This sequence belongs to the universal ribosomal protein uL2 family. Part of the 50S ribosomal subunit. Forms a bridge to the 30S subunit in the 70S ribosome.

One of the primary rRNA binding proteins. Required for association of the 30S and 50S subunits to form the 70S ribosome, for tRNA binding and peptide bond formation. It has been suggested to have peptidyltransferase activity; this is somewhat controversial. Makes several contacts with the 16S rRNA in the 70S ribosome. The polypeptide is Large ribosomal subunit protein uL2 (Chloroherpeton thalassium (strain ATCC 35110 / GB-78)).